Consider the following 360-residue polypeptide: Flavin-dependent trigonelline monooxygenase, oxygenase component (360 aa).

This sequence belongs to the bacterial luciferase oxidoreductase family. As to quaternary structure, homodimer. The trigonelline monooxygenase is composed of a reductase component TgnA and an oxygenase component TgnB.

It catalyses the reaction N-methylnicotinate + FMNH2 + O2 = (Z)-2-((N-methylformamido)methylene)-5-hydroxybutanolactone + FMN + H(+). It carries out the reaction N-methylnicotinate + FADH2 + O2 = (Z)-2-((N-methylformamido)methylene)-5-hydroxybutanolactone + FAD + H(+). In terms of biological role, involved in the degradation of the pyridine ring of trigonelline (TG; N-methylnicotinate) into succinate and methylamine as carbon and nitrogen sources, respectively. Catalyzes the insertion of two oxygens, followed by a ring cleavage of trigonelline to yield (Z)-2-((N-methylformamido)methylene)-5-hydroxybutyrolactone (MFMB). It is able to use reduced FMN or FAD. This Acinetobacter baylyi (strain ATCC 33305 / BD413 / ADP1) protein is Flavin-dependent trigonelline monooxygenase, oxygenase component.